A 467-amino-acid polypeptide reads, in one-letter code: ATP-dependent protease ATPase subunit HslU (467 aa).

Residues Val22 and 64–69 each bind ATP; that span reads GVGKTE. The tract at residues 146–185 is disordered; sequence KASNNSNPLESLLGGAIPNFGNNDDEEEETPTEEIKTKRS. Positions 168 to 177 are enriched in acidic residues; the sequence is NDDEEEETPT. The ATP site is built by Asp280, Glu345, and Arg417.

Belongs to the ClpX chaperone family. HslU subfamily. As to quaternary structure, a double ring-shaped homohexamer of HslV is capped on each side by a ring-shaped HslU homohexamer. The assembly of the HslU/HslV complex is dependent on binding of ATP.

Its subcellular location is the cytoplasm. In terms of biological role, ATPase subunit of a proteasome-like degradation complex; this subunit has chaperone activity. The binding of ATP and its subsequent hydrolysis by HslU are essential for unfolding of protein substrates subsequently hydrolyzed by HslV. HslU recognizes the N-terminal part of its protein substrates and unfolds these before they are guided to HslV for hydrolysis. The polypeptide is ATP-dependent protease ATPase subunit HslU (Staphylococcus haemolyticus (strain JCSC1435)).